The sequence spans 335 residues: PA-phosphatase related-family protein DDB_G0275547 (335 aa).

The next 6 membrane-spanning stretches (helical) occupy residues 43-63 (VMYL…GILF), 93-113 (VLIP…SLIV), 124-144 (ILGL…FKCF), 202-222 (SITA…FKIF), 226-246 (GHIF…LIGI), and 254-274 (HTFL…LSCY).

It belongs to the PA-phosphatase related phosphoesterase family.

It localises to the membrane. In Dictyostelium discoideum (Social amoeba), this protein is PA-phosphatase related-family protein DDB_G0275547.